The chain runs to 186 residues: Probable RNA 2'-phosphotransferase (186 aa).

The protein belongs to the KptA/TPT1 family.

Functionally, removes the 2'-phosphate from RNA via an intermediate in which the phosphate is ADP-ribosylated by NAD followed by a presumed transesterification to release the RNA and generate ADP-ribose 1''-2''-cyclic phosphate (APPR&gt;P). May function as an ADP-ribosylase. The sequence is that of Probable RNA 2'-phosphotransferase from Clostridium perfringens (strain SM101 / Type A).